Consider the following 2202-residue polypeptide: Activating signal cointegrator 1 complex subunit 3 (2202 aa).

Residues 1–400 (MALPRLTGAL…RQRDADVEKI (400 aa)) are required for interaction with ASCC2. Ser12 bears the Phosphoserine mark. Coiled coils occupy residues 18 to 79 (KQDN…AAKQ) and 328 to 356 (IQSEQEKQLMKQYRREEKRIARREKKAGE). The 184-residue stretch at 486-669 (ETAYNTNENM…FLHVNPYIGL (184 aa)) folds into the Helicase ATP-binding 1 domain. 499–506 (APTGAGKT) is an ATP binding site. The residue at position 572 (Lys572) is an N6-acetyllysine. Positions 611-614 (DEVH) match the DEVH box motif. One can recognise a Helicase C-terminal 1 domain in the interval 728-914 (TVRTAMSLIE…GTVTNVEEAV (187 aa)). The 310-residue stretch at 978–1287 (STDLGRTASH…GAEAVCIINF (310 aa)) folds into the SEC63 1 domain. In terms of domain architecture, Helicase ATP-binding 2 spans 1336–1511 (HTLYHTDCNV…WLNIKQMGLF (176 aa)). 1349–1356 (APTGSGKT) is an ATP binding site. A DEIH box motif is present at residues 1453-1456 (DEIH). The Helicase C-terminal 2 domain maps to 1544–1739 (PAFQAIRSHS…VLSDHLNAEI (196 aa)). Residues 1812 to 2176 (PLTYGRIASY…LGLDQQYDIY (365 aa)) form the SEC63 2 domain. Ser2195 is subject to Phosphoserine.

The protein belongs to the helicase family. Identified in the ASCC complex that contains ASCC1, ASCC2 and ASCC3. Functions as scaffolding subunit that interacts directly with both ASCC1 and ASCC2. Interacts directly with ALKBH3, and thereby recruits ALKBH3 to the ASCC complex. Part of the ASC-1/TRIP4 complex, that contains TRIP4, ASCC1, ASCC2 and ASCC3. Part of the RQT (ribosome quality control trigger) complex, that contains ASCC2, ASCC3 and TRIP4. Associates with ribosomes; recruited to collided ribosomes. Interacts with ZCCHC4. Interacts with ZNF598. Interacts with RPS3. In terms of tissue distribution, ubiquitous.

The protein resides in the nucleus. The protein localises to the nucleus speckle. Its subcellular location is the cytoplasm. It localises to the cytosol. The catalysed reaction is Couples ATP hydrolysis with the unwinding of duplex DNA by translocating in the 3'-5' direction.. It carries out the reaction ATP + H2O = ADP + phosphate + H(+). ATPase involved both in DNA repair and rescue of stalled ribosomes. 3'-5' DNA helicase involved in repair of alkylated DNA: promotes DNA unwinding to generate single-stranded substrate needed for ALKBH3, enabling ALKBH3 to process alkylated N3-methylcytosine (3mC) within double-stranded regions. Also involved in activation of the ribosome quality control (RQC) pathway, a pathway that degrades nascent peptide chains during problematic translation. Drives the splitting of stalled ribosomes that are ubiquitinated in a ZNF598-dependent manner, as part of the ribosome quality control trigger (RQT) complex. Part of the ASC-1 complex that enhances NF-kappa-B, SRF and AP1 transactivation. This is Activating signal cointegrator 1 complex subunit 3 (ASCC3) from Homo sapiens (Human).